The sequence spans 791 residues: Vezatin (791 aa).

2 helical membrane-spanning segments follow: residues 138–158 and 163–183; these read IATP…ALAA and SISS…FTVL. Residues 435–464 adopt a coiled-coil conformation; sequence VRSLQLHLKALLNEVIILEDELEKLSSCKE. Positions 752–769 are enriched in acidic residues; the sequence is GDEWDDDDDDNDNDDDNY. The disordered stretch occupies residues 752 to 791; it reads GDEWDDDDDDNDNDDDNYDQVKNVESHEKERNNVSLQLEE. The span at 773–783 shows a compositional bias: basic and acidic residues; sequence KNVESHEKERN.

It belongs to the vezatin family. In terms of assembly, interacts with myosin VIIa and the cadherin-catenins complex.

It localises to the cell membrane. Its subcellular location is the cell junction. The protein localises to the adherens junction. The protein resides in the nucleus. Plays a pivotal role in the establishment of adherens junctions and their maintenance in adult life. The polypeptide is Vezatin (vezt) (Xenopus tropicalis (Western clawed frog)).